The sequence spans 59 residues: Large ribosomal subunit protein uL30 (59 aa).

It belongs to the universal ribosomal protein uL30 family. In terms of assembly, part of the 50S ribosomal subunit.

The protein is Large ribosomal subunit protein uL30 of Staphylococcus epidermidis (strain ATCC 12228 / FDA PCI 1200).